A 467-amino-acid chain; its full sequence is Ribulose bisphosphate carboxylase large chain (467 aa).

Lys-5 is modified (N6,N6,N6-trimethyllysine). Positions 114 and 164 each coordinate substrate. Catalysis depends on Lys-166, which acts as the Proton acceptor. Residue Lys-168 coordinates substrate. Mg(2+)-binding residues include Lys-192, Asp-194, and Glu-195. Lys-192 bears the N6-carboxylysine mark. His-285 (proton acceptor) is an active-site residue. Substrate contacts are provided by Arg-286, His-318, and Ser-370.

It belongs to the RuBisCO large chain family. Type I subfamily. Heterohexadecamer of 8 large chains and 8 small chains; disulfide-linked. The disulfide link is formed within the large subunit homodimers. Mg(2+) serves as cofactor. Post-translationally, the disulfide bond which can form in the large chain dimeric partners within the hexadecamer appears to be associated with oxidative stress and protein turnover.

The protein localises to the plastid. Its subcellular location is the chloroplast. It catalyses the reaction 2 (2R)-3-phosphoglycerate + 2 H(+) = D-ribulose 1,5-bisphosphate + CO2 + H2O. The catalysed reaction is D-ribulose 1,5-bisphosphate + O2 = 2-phosphoglycolate + (2R)-3-phosphoglycerate + 2 H(+). Functionally, ruBisCO catalyzes two reactions: the carboxylation of D-ribulose 1,5-bisphosphate, the primary event in carbon dioxide fixation, as well as the oxidative fragmentation of the pentose substrate in the photorespiration process. Both reactions occur simultaneously and in competition at the same active site. This is Ribulose bisphosphate carboxylase large chain from Tasmannia insipida (Pepperbush).